A 407-amino-acid polypeptide reads, in one-letter code: Phosphopentomutase (407 aa).

Residues aspartate 10, aspartate 306, histidine 311, aspartate 347, histidine 348, and histidine 359 each coordinate Mn(2+).

Belongs to the phosphopentomutase family. Requires Mn(2+) as cofactor.

Its subcellular location is the cytoplasm. It catalyses the reaction 2-deoxy-alpha-D-ribose 1-phosphate = 2-deoxy-D-ribose 5-phosphate. The catalysed reaction is alpha-D-ribose 1-phosphate = D-ribose 5-phosphate. It functions in the pathway carbohydrate degradation; 2-deoxy-D-ribose 1-phosphate degradation; D-glyceraldehyde 3-phosphate and acetaldehyde from 2-deoxy-alpha-D-ribose 1-phosphate: step 1/2. In terms of biological role, isomerase that catalyzes the conversion of deoxy-ribose 1-phosphate (dRib-1-P) and ribose 1-phosphate (Rib-1-P) to deoxy-ribose 5-phosphate (dRib-5-P) and ribose 5-phosphate (Rib-5-P), respectively. The sequence is that of Phosphopentomutase from Yersinia pestis bv. Antiqua (strain Antiqua).